The primary structure comprises 435 residues: Actin-like protein 7A (435 aa).

Positions 1–64 (MWAPPAAIMG…TESKAAKERP (64 aa)) are disordered. A compositionally biased stretch (low complexity) spans 20 to 31 (QAPLQTQALQTA). A required for interaction with TES region spans residues 31 to 51 (ASLRDGPAKRAVWVRHTSSEP). The segment covering 55–64 (TESKAAKERP) has biased composition (basic and acidic residues).

This sequence belongs to the actin family. As to quaternary structure, interacts (via N-terminus) with TES (via LIM domain 2). Heterodimer with TES; the heterodimer interacts with ENAH to form a heterotrimer. Interacts with ACTL9. Interacts with CYLC1; the interaction may be relevant for proper acrosome attachment to the nuclear envelope. As to expression, strongly expressed in testis. Also expressed in other tissues.

It is found in the cytoplasm. Its subcellular location is the cytoskeleton. The protein localises to the golgi apparatus. It localises to the nucleus. The protein resides in the cytoplasmic vesicle. It is found in the secretory vesicle. Its subcellular location is the acrosome. Its function is as follows. Essential for normal spermatogenesis and male fertility. Required for normal sperm head morphology, acroplaxome formation, acrosome attachment, and acrosome granule stability. May anchor and stabilize acrosomal adherence to the acroplaxome at least in part by facilitating the presence of F-actin in the subacrosomal space. May play an important role in formation and fusion of Golgi-derived vesicles during acrosome biogenesis. This is Actin-like protein 7A (ACTL7A) from Homo sapiens (Human).